The chain runs to 352 residues: Protein RecA (352 aa).

65-72 (GPESSGKT) contributes to the ATP binding site. The tract at residues 332-352 (EEVEKADVKKDAKKDAAEALK) is disordered. The segment covering 333 to 352 (EVEKADVKKDAKKDAAEALK) has biased composition (basic and acidic residues).

Belongs to the RecA family.

It localises to the cytoplasm. Its function is as follows. Can catalyze the hydrolysis of ATP in the presence of single-stranded DNA, the ATP-dependent uptake of single-stranded DNA by duplex DNA, and the ATP-dependent hybridization of homologous single-stranded DNAs. It interacts with LexA causing its activation and leading to its autocatalytic cleavage. The chain is Protein RecA from Photobacterium profundum (strain SS9).